The following is a 120-amino-acid chain: NAD(P)H-quinone oxidoreductase subunit 3, chloroplastic (120 aa).

3 consecutive transmembrane segments (helical) span residues Ile-9–Gly-29, Tyr-62–Trp-82, and Val-88–Leu-108.

It belongs to the complex I subunit 3 family. NDH is composed of at least 16 different subunits, 5 of which are encoded in the nucleus.

It is found in the plastid. The protein localises to the chloroplast thylakoid membrane. It carries out the reaction a plastoquinone + NADH + (n+1) H(+)(in) = a plastoquinol + NAD(+) + n H(+)(out). It catalyses the reaction a plastoquinone + NADPH + (n+1) H(+)(in) = a plastoquinol + NADP(+) + n H(+)(out). Its function is as follows. NDH shuttles electrons from NAD(P)H:plastoquinone, via FMN and iron-sulfur (Fe-S) centers, to quinones in the photosynthetic chain and possibly in a chloroplast respiratory chain. The immediate electron acceptor for the enzyme in this species is believed to be plastoquinone. Couples the redox reaction to proton translocation, and thus conserves the redox energy in a proton gradient. This Trachelium caeruleum (Blue throatwort) protein is NAD(P)H-quinone oxidoreductase subunit 3, chloroplastic.